An 837-amino-acid polypeptide reads, in one-letter code: Protein translocase subunit SecA (837 aa).

ATP is bound by residues Gln85, 103 to 107, and Asp493; that span reads GEGKT. Residues Cys821, Cys823, Cys832, and His833 each contribute to the Zn(2+) site.

Belongs to the SecA family. As to quaternary structure, monomer and homodimer. Part of the essential Sec protein translocation apparatus which comprises SecA, SecYEG and auxiliary proteins SecDF. Other proteins may also be involved. It depends on Zn(2+) as a cofactor.

It is found in the cell membrane. It localises to the cytoplasm. The enzyme catalyses ATP + H2O + cellular proteinSide 1 = ADP + phosphate + cellular proteinSide 2.. Functionally, part of the Sec protein translocase complex. Interacts with the SecYEG preprotein conducting channel. Has a central role in coupling the hydrolysis of ATP to the transfer of proteins into and across the cell membrane, serving as an ATP-driven molecular motor driving the stepwise translocation of polypeptide chains across the membrane. This chain is Protein translocase subunit SecA, found in Streptococcus pneumoniae (strain ATCC BAA-255 / R6).